Here is a 249-residue protein sequence, read N- to C-terminus: Small ribosomal subunit protein uS2 (249 aa).

The protein belongs to the universal ribosomal protein uS2 family.

The polypeptide is Small ribosomal subunit protein uS2 (Bordetella parapertussis (strain 12822 / ATCC BAA-587 / NCTC 13253)).